A 191-amino-acid polypeptide reads, in one-letter code: Fe/S biogenesis protein NfuA (191 aa).

2 residues coordinate [4Fe-4S] cluster: C149 and C152.

It belongs to the NfuA family. Homodimer. It depends on [4Fe-4S] cluster as a cofactor.

Functionally, involved in iron-sulfur cluster biogenesis. Binds a 4Fe-4S cluster, can transfer this cluster to apoproteins, and thereby intervenes in the maturation of Fe/S proteins. Could also act as a scaffold/chaperone for damaged Fe/S proteins. The sequence is that of Fe/S biogenesis protein NfuA from Pseudoalteromonas translucida (strain TAC 125).